Reading from the N-terminus, the 725-residue chain is Polyribonucleotide nucleotidyltransferase (725 aa).

Residues D488 and D494 each coordinate Mg(2+). The 60-residue stretch at 555 to 614 folds into the KH domain; sequence PRMITMKIHPDKIREVIGKGGSTIQALTKETGTTIDIQEDGTITIASTSTDGMAEAKRRI. The 69-residue stretch at 624–692 folds into the S1 motif domain; the sequence is GKIYAGTVLK…EKGRLRLSLK (69 aa). Positions 702–725 are disordered; sequence ISPIAQGDAPAAAPAAPASPDQQQ. A compositionally biased stretch (low complexity) spans 706–725; that stretch reads AQGDAPAAAPAAPASPDQQQ.

It belongs to the polyribonucleotide nucleotidyltransferase family. Mg(2+) serves as cofactor.

The protein localises to the cytoplasm. The catalysed reaction is RNA(n+1) + phosphate = RNA(n) + a ribonucleoside 5'-diphosphate. Involved in mRNA degradation. Catalyzes the phosphorolysis of single-stranded polyribonucleotides processively in the 3'- to 5'-direction. The chain is Polyribonucleotide nucleotidyltransferase from Cupriavidus metallidurans (strain ATCC 43123 / DSM 2839 / NBRC 102507 / CH34) (Ralstonia metallidurans).